A 364-amino-acid chain; its full sequence is Aminomethyltransferase (364 aa).

This sequence belongs to the GcvT family. In terms of assembly, the glycine cleavage system is composed of four proteins: P, T, L and H.

The enzyme catalyses N(6)-[(R)-S(8)-aminomethyldihydrolipoyl]-L-lysyl-[protein] + (6S)-5,6,7,8-tetrahydrofolate = N(6)-[(R)-dihydrolipoyl]-L-lysyl-[protein] + (6R)-5,10-methylene-5,6,7,8-tetrahydrofolate + NH4(+). In terms of biological role, the glycine cleavage system catalyzes the degradation of glycine. This Escherichia coli O81 (strain ED1a) protein is Aminomethyltransferase.